We begin with the raw amino-acid sequence, 388 residues long: MIKNPKVLILTAHYGNGHVQVAKTLEQTFRQKGIEDVIVCDLFGESHPVITDITKYLYLKSYTVGKELYRLFYYGVEKIYDKKIASWYANFGRKRLKTLLQVEKPDIVINTFPIIAVPELKKQIGISIPVYNVLTDFCVHKIWIHREVDRYFVATDHVKKVMVDIGVPAEQIVETGIPIRSSFELKINPAIIYNKYQLCKDKKMLLIVAGAHGVLGSVKELCQSFMSVPNLQVVVVCGKNEALKQDLMELQEQGSDALKVFGYVENIDELFRVTSCMITKPGGITLSEAAALQVPVILYKPVPGQENENALYFEKKGAAVVIRDDSEVFAKTEALLQDDMKLLQMKEAMKSIYRPEPAGHIVDTILAENHAEPNHIPIKSPVLAESFT.

This sequence belongs to the glycosyltransferase 28 family. UgtP subfamily.

The protein resides in the cell membrane. It carries out the reaction a 1,2-diacyl-3-O-(beta-D-glucopyranosyl)-sn-glycerol + UDP-alpha-D-glucose = a 1,2-diacyl-3-O-(beta-D-Glc-(1-&gt;6)-beta-D-Glc)-sn-glycerol + UDP + H(+). It catalyses the reaction a 1,2-diacyl-3-O-(beta-D-Glc-(1-&gt;6)-beta-D-Glc)-sn-glycerol + UDP-alpha-D-glucose = a 1,2-diacyl-3-O-(beta-D-Glc-(1-&gt;6)-beta-D-Glc-(1-&gt;6)-beta-D-Glc)-sn-glycerol + UDP + H(+). The enzyme catalyses a 1,2-diacyl-sn-glycerol + UDP-alpha-D-glucose = a 1,2-diacyl-3-O-(beta-D-glucopyranosyl)-sn-glycerol + UDP + H(+). It functions in the pathway glycolipid metabolism; diglucosyl-diacylglycerol biosynthesis. Functionally, processive glucosyltransferase involved in the biosynthesis of both the bilayer- and non-bilayer-forming membrane glucolipids. Is able to successively transfer up to three glucosyl residues to diacylglycerol (DAG), thereby catalyzing the formation of beta-monoglucosyl-DAG (3-O-(beta-D-glucopyranosyl)-1,2-diacyl-sn-glycerol), beta-diglucosyl-DAG (3-O-(beta-D-glucopyranosyl-beta-(1-&gt;6)-D-glucopyranosyl)-1,2-diacyl-sn-glycerol) and beta-triglucosyl-DAG (3-O-(beta-D-glucopyranosyl-beta-(1-&gt;6)-D-glucopyranosyl-beta-(1-&gt;6)-D-glucopyranosyl)-1,2-diacyl-sn-glycerol). Beta-diglucosyl-DAG is the predominant glycolipid found in Bacillales and is also used as a membrane anchor for lipoteichoic acid (LTA). This chain is Processive diacylglycerol beta-glucosyltransferase, found in Bacillus mycoides (strain KBAB4) (Bacillus weihenstephanensis).